The following is a 417-amino-acid chain: Putative plant UBX domain-containing protein 14 (417 aa).

In terms of domain architecture, UBX spans aspartate 335–threonine 415.

The chain is Putative plant UBX domain-containing protein 14 from Arabidopsis thaliana (Mouse-ear cress).